Consider the following 359-residue polypeptide: Probable E3 ubiquitin-protein ligase LUL4 (359 aa).

The interval 1–35 is disordered; it reads MGISFSNNNRRRDNNNRRHLHHYPPPPPYYYLDPP. Gly-2 carries the N-myristoyl glycine lipid modification. Pro residues predominate over residues 23–35; it reads YPPPPPYYYLDPP. The tract at residues 148–267 is DAR2 domain; it reads FVFDALFDGS…GSFKVKVVKQ (120 aa). The segment at 302 to 341 adopts an RING-type zinc-finger fold; the sequence is CVICMTEAKDTAVLPCRHLCMCSDCAKELRLQSNKCPICR.

Belongs to the RING-type zinc finger family. LOG2 subfamily.

It carries out the reaction S-ubiquitinyl-[E2 ubiquitin-conjugating enzyme]-L-cysteine + [acceptor protein]-L-lysine = [E2 ubiquitin-conjugating enzyme]-L-cysteine + N(6)-ubiquitinyl-[acceptor protein]-L-lysine.. The protein operates within protein modification; protein ubiquitination. Acts as an E3 ubiquitin-protein ligase, or as part of E3 complex, which accepts ubiquitin from specific E2 ubiquitin-conjugating enzymes and then transfers it to substrates (in vitro). This is Probable E3 ubiquitin-protein ligase LUL4 (LUL4) from Arabidopsis thaliana (Mouse-ear cress).